Reading from the N-terminus, the 291-residue chain is 4-hydroxy-tetrahydrodipicolinate synthase (291 aa).

Thr-44 lines the pyruvate pocket. Tyr-132 (proton donor/acceptor) is an active-site residue. The active-site Schiff-base intermediate with substrate is the Lys-160. Ile-202 is a pyruvate binding site.

This sequence belongs to the DapA family. As to quaternary structure, homotetramer; dimer of dimers.

The protein localises to the cytoplasm. It catalyses the reaction L-aspartate 4-semialdehyde + pyruvate = (2S,4S)-4-hydroxy-2,3,4,5-tetrahydrodipicolinate + H2O + H(+). It functions in the pathway amino-acid biosynthesis; L-lysine biosynthesis via DAP pathway; (S)-tetrahydrodipicolinate from L-aspartate: step 3/4. In terms of biological role, catalyzes the condensation of (S)-aspartate-beta-semialdehyde [(S)-ASA] and pyruvate to 4-hydroxy-tetrahydrodipicolinate (HTPA). The chain is 4-hydroxy-tetrahydrodipicolinate synthase from Sphingopyxis alaskensis (strain DSM 13593 / LMG 18877 / RB2256) (Sphingomonas alaskensis).